Here is a 206-residue protein sequence, read N- to C-terminus: Probable NAD(+) phosphorylase Rv3189 (206 aa).

Belongs to the MbcT/ParT/Res family. As to quaternary structure, forms a heterotetramer with cognate antitoxin Rv3188.

It carries out the reaction phosphate + NAD(+) = ADP-alpha-D-ribose 1''-phosphate + nicotinamide + H(+). Probable toxic component of a type II toxin-antitoxin (TA) system. Degrades NAD(+) by phosphorolysis. Neutralized by its cognate antitoxin Rv3188. The protein is Probable NAD(+) phosphorylase Rv3189 of Mycobacterium tuberculosis (strain ATCC 25618 / H37Rv).